Consider the following 344-residue polypeptide: BURP domain-containing protein 16 (344 aa).

Residues 1–25 form the signal peptide; that stretch reads MATSFLFSLILLLITALSLPFPLHA. N-linked (GlcNAc...) asparagine glycans are attached at residues Asn-90, Asn-120, Asn-181, and Asn-333. A BURP domain is found at 128–341; sequence FFREQELKEG…FNGSMTWVIA (214 aa).

As to expression, expressed in roots, stems, leaves and panicles.

The sequence is that of BURP domain-containing protein 16 (BURP16) from Oryza sativa subsp. japonica (Rice).